Consider the following 211-residue polypeptide: Ribosomal RNA small subunit methyltransferase G (211 aa).

Residues glycine 74, leucine 79, 125-126, and arginine 140 each bind S-adenosyl-L-methionine; that span reads AE.

The protein belongs to the methyltransferase superfamily. RNA methyltransferase RsmG family.

It localises to the cytoplasm. Its function is as follows. Specifically methylates the N7 position of guanine in position 518 of 16S rRNA. The sequence is that of Ribosomal RNA small subunit methyltransferase G from Clavibacter sepedonicus (Clavibacter michiganensis subsp. sepedonicus).